The chain runs to 212 residues: Adenylate kinase (212 aa).

10-15 (GAGKGT) provides a ligand contact to ATP. Residues 30 to 59 (STGDMFRAAIANQTEMGVLAKSYIDKGELV) are NMP. Residues threonine 31, arginine 36, 57 to 59 (ELV), 86 to 89 (GYPR), and glutamine 93 each bind AMP. The segment at 127 to 159 (GRIIHRETGETFHKVFNPPADYKEEDYYQREDD) is LID. ATP-binding positions include arginine 128 and 137–138 (TF). The AMP site is built by arginine 156 and arginine 167. Position 195 (glutamine 195) interacts with ATP.

Belongs to the adenylate kinase family. As to quaternary structure, monomer.

The protein resides in the cytoplasm. It carries out the reaction AMP + ATP = 2 ADP. It functions in the pathway purine metabolism; AMP biosynthesis via salvage pathway; AMP from ADP: step 1/1. Its function is as follows. Catalyzes the reversible transfer of the terminal phosphate group between ATP and AMP. Plays an important role in cellular energy homeostasis and in adenine nucleotide metabolism. In Streptococcus sanguinis (strain SK36), this protein is Adenylate kinase.